The sequence spans 209 residues: 60S ribosomal subunit assembly/export protein loc-1 (209 aa).

2 disordered regions span residues 1-53 and 135-209; these read MAPT…SKGR and REAR…AAPE. Composition is skewed to basic and acidic residues over residues 20 to 33 and 135 to 159; these read GSKD…DGVL and REAR…TKDS. Positions 126-170 form a coiled coil; the sequence is IKARQMEEIREARRAEAEKKEAERKARLEETKDSLRKKRKRSKQS.

Belongs to the LOC1 family. As to quaternary structure, component of the 66S pre-ribosomal particle.

It is found in the nucleus. It localises to the nucleolus. Its function is as follows. Required for efficient assembly and nuclear export of the 60S ribosomal subunit. The protein is 60S ribosomal subunit assembly/export protein loc-1 (loc-1) of Neurospora crassa (strain ATCC 24698 / 74-OR23-1A / CBS 708.71 / DSM 1257 / FGSC 987).